The primary structure comprises 225 residues: uncharacterized protein (225 aa).

This is an uncharacterized protein from Amsacta moorei entomopoxvirus (AmEPV).